Reading from the N-terminus, the 426-residue chain is Phytoene synthase 3, chloroplastic (426 aa).

Residues 1–52 (MMSTSRAVKSPACAARRRQWSADAPNRTATFLACRHGRRLGGGGGAPCSVRA) constitute a chloroplast transit peptide.

It belongs to the phytoene/squalene synthase family. As to expression, expressed in roots and endosperm.

It is found in the plastid. Its subcellular location is the chloroplast. It localises to the plastoglobule. It carries out the reaction 2 (2E,6E,10E)-geranylgeranyl diphosphate = 15-cis-phytoene + 2 diphosphate. Catalyzes the conversion of geranylgeranyl diphosphate to phytoene. Mediates the first committed step in carotenoid biosynthesis. May play a role in regulating carotenoid flux in response to abiotic stress in roots. May control flux to carotenoid precursors that are required for abiotic stress-induced abscisic acid (ABA) formation in roots. The chain is Phytoene synthase 3, chloroplastic from Zea mays (Maize).